A 422-amino-acid polypeptide reads, in one-letter code: UDP-N-acetylglucosamine 1-carboxyvinyltransferase (422 aa).

22-23 (KN) lines the phosphoenolpyruvate pocket. Arginine 92 serves as a coordination point for UDP-N-acetyl-alpha-D-glucosamine. Catalysis depends on cysteine 116, which acts as the Proton donor. At cysteine 116 the chain carries 2-(S-cysteinyl)pyruvic acid O-phosphothioketal. UDP-N-acetyl-alpha-D-glucosamine-binding positions include 121-125 (RPIDL), aspartate 307, and leucine 329.

It belongs to the EPSP synthase family. MurA subfamily.

The protein localises to the cytoplasm. The enzyme catalyses phosphoenolpyruvate + UDP-N-acetyl-alpha-D-glucosamine = UDP-N-acetyl-3-O-(1-carboxyvinyl)-alpha-D-glucosamine + phosphate. It functions in the pathway cell wall biogenesis; peptidoglycan biosynthesis. Functionally, cell wall formation. Adds enolpyruvyl to UDP-N-acetylglucosamine. This chain is UDP-N-acetylglucosamine 1-carboxyvinyltransferase, found in Sulfurovum sp. (strain NBC37-1).